The sequence spans 670 residues: MASKVEQEIRDLREKIRYHEYRYYVLDDPEISDAEFDELIQRLIDLEEKHPGLVTPDSPTQRVGGEPLDKFDKVEHRVPMLSLGNAFNEGDLTNFARRIYRLLDTGKIDFVVEHKIDGLSAILTYQGGRLIRGATRGNGVVGEDVTANIKTIPSVPLRLKKDVDIEVRGEVYIKKDDFSKLNERRLKKGEEPFANPRNAAAGSIRQLDPRLAAARPLSFIAYDVVAYEGEGLQTHVGALELLRELGFKVNWYRKCDDITEVVNICKDWVDKREELPFEIDGMVIKVNELGLREQLGATAKSPRWAIAYKFPAQQKTTVVKDIIISVGRTGALTPTAVLEPVEVDGSTVSRATLHNEDEIRRKDVRIGDHVLVQKAGDVIPEVVKVIKSKRDGSEQIFHMPETCPACGGEVVREEGEAVLRCVNVTGCPAQRREGILHFVSRNAMNIDGVGPALIDQLLEKGLIEDYADLYYLKKEDLIPLERMGEKSATNAIEAIRASKDRPLFRVIFALGIRHVGLGVARVLTEKYRSLSDLMRASGEELVAIDEIGPTIARSIIEFFKEPHNREVINKLKEAGVRLEEKENGKEEQNLYLSGKTFVFTGKLDGFTRSEARDKVIAAGGKVTSSVSRKTDYVVVGDSPGSKYDKARELGVTILDEDKFKEVLKAGDNNG.

NAD(+)-binding positions include 33-37 (DAEFD), 82-83 (SL), and Glu113. The active-site N6-AMP-lysine intermediate is the Lys115. NAD(+) contacts are provided by Arg136, Glu170, Lys285, and Lys309. Residues Cys403, Cys406, Cys421, and Cys427 each contribute to the Zn(2+) site. In terms of domain architecture, BRCT spans 587–670 (EQNLYLSGKT…EVLKAGDNNG (84 aa)).

The protein belongs to the NAD-dependent DNA ligase family. LigA subfamily. The cofactor is Mg(2+). It depends on Mn(2+) as a cofactor.

The enzyme catalyses NAD(+) + (deoxyribonucleotide)n-3'-hydroxyl + 5'-phospho-(deoxyribonucleotide)m = (deoxyribonucleotide)n+m + AMP + beta-nicotinamide D-nucleotide.. Its function is as follows. DNA ligase that catalyzes the formation of phosphodiester linkages between 5'-phosphoryl and 3'-hydroxyl groups in double-stranded DNA using NAD as a coenzyme and as the energy source for the reaction. It is essential for DNA replication and repair of damaged DNA. The protein is DNA ligase of Halothermothrix orenii (strain H 168 / OCM 544 / DSM 9562).